The chain runs to 684 residues: Leishmanolysin-like peptidase (684 aa).

Histidine 257 serves as a coordination point for Zn(2+). Residue glutamate 258 is part of the active site. The Zn(2+) site is built by histidine 261 and histidine 364.

The protein belongs to the peptidase M8 family. Zn(2+) serves as cofactor.

It is found in the cytoplasm. In terms of biological role, essential for the coordination of mitotic progression, and also plays a role in cell migration. The sequence is that of Leishmanolysin-like peptidase from Drosophila pseudoobscura pseudoobscura (Fruit fly).